The primary structure comprises 178 residues: Large ribosomal subunit protein uL10 (178 aa).

The protein belongs to the universal ribosomal protein uL10 family. Part of the ribosomal stalk of the 50S ribosomal subunit. The N-terminus interacts with L11 and the large rRNA to form the base of the stalk. The C-terminus forms an elongated spine to which L12 dimers bind in a sequential fashion forming a multimeric L10(L12)X complex.

Its function is as follows. Forms part of the ribosomal stalk, playing a central role in the interaction of the ribosome with GTP-bound translation factors. The chain is Large ribosomal subunit protein uL10 from Salinibacter ruber (strain DSM 13855 / M31).